We begin with the raw amino-acid sequence, 211 residues long: uncharacterized protein (211 aa).

4 helical membrane passes run 77-97 (FLMF…AITI), 113-133 (GISV…VLIG), 152-172 (ILIS…NVIP), and 179-199 (LLTP…PLFG).

The protein resides in the cell membrane. This is an uncharacterized protein from Bacillus subtilis (strain 168).